The primary structure comprises 214 residues: Vascular endothelial growth factor A (214 aa).

Positions 1 to 26 are cleaved as a signal peptide; the sequence is MNFLLSWVHWSLALLLYLHHAKWSQA. Disulfide bonds link cysteine 51–cysteine 93, cysteine 82–cysteine 127, and cysteine 86–cysteine 129. N-linked (GlcNAc...) asparagine glycosylation is present at asparagine 100. Residues 131–142 show a composition bias toward basic and acidic residues; that stretch reads PKKDRARQEKKS. Residues 131–162 are disordered; that stretch reads PKKDRARQEKKSIRGKGKGQKRKRKKSRYKPW. Residues 143–159 show a composition bias toward basic residues; that stretch reads IRGKGKGQKRKRKKSRY.

This sequence belongs to the PDGF/VEGF growth factor family. In terms of assembly, homodimer; disulfide-linked. Also found as heterodimer with PGF. Interacts with NRP1. Interacts with BSG. Interacts with CD82; this interaction inhibits VEGFA-mediated signaling pathway.

Its subcellular location is the secreted. Its function is as follows. Growth factor active in angiogenesis, vasculogenesis and endothelial cell growth. Induces endothelial cell proliferation, promotes cell migration, inhibits apoptosis and induces permeabilization of blood vessels. Binds to the FLT1/VEGFR1 and KDR/VEGFR2 receptors, heparan sulfate and heparin. Binding to NRP1 receptor initiates a signaling pathway needed for motor neuron axon guidance and cell body migration, including for the caudal migration of facial motor neurons from rhombomere 4 to rhombomere 6 during embryonic development. Also binds the DEAR/FBXW7-AS1 receptor. In Canis lupus familiaris (Dog), this protein is Vascular endothelial growth factor A (VEGFA).